The following is a 298-amino-acid chain: Lysozyme-like protein 1 (298 aa).

An N-terminal signal peptide occupies residues 1 to 16; sequence MLKLAFVTFLFALASA. Residues 59–277 enclose the Ch-type lysozyme domain; the sequence is YAYAVDISVP…AAASSKNTDF (219 aa).

Belongs to the glycosyl hydrolase 25 family. As to expression, expressed in intestine, IL2 and IL6 neurons and some neurons in the head ganglia.

The protein localises to the cytoplasmic vesicle lumen. In terms of biological role, involved in resistance to Gram-negative bacterium S.marcescens and to bacterium Gram-positive S.aureus infection. This chain is Lysozyme-like protein 1, found in Caenorhabditis elegans.